The primary structure comprises 310 residues: Glutaminase 1 (310 aa).

The substrate site is built by serine 66, asparagine 117, glutamate 161, asparagine 168, tyrosine 192, tyrosine 244, and valine 262. An N6-acetyllysine modification is found at lysine 294.

The protein belongs to the glutaminase family. As to quaternary structure, homotetramer.

The enzyme catalyses L-glutamine + H2O = L-glutamate + NH4(+). This is Glutaminase 1 from Escherichia coli O6:H1 (strain CFT073 / ATCC 700928 / UPEC).